The primary structure comprises 130 residues: Small ribosomal subunit protein uS9 (130 aa).

Belongs to the universal ribosomal protein uS9 family.

The chain is Small ribosomal subunit protein uS9 from Burkholderia vietnamiensis (strain G4 / LMG 22486) (Burkholderia cepacia (strain R1808)).